We begin with the raw amino-acid sequence, 264 residues long: Major prion protein (264 aa).

The signal sequence occupies residues 1–24; that stretch reads MVKSHIGSWILVLFVAMWSDVGLC. Positions 25–241 are interaction with GRB2, ERI3 and SYN1; that stretch reads KKRPKPGGGW…ESQAYYQRGA (217 aa). A disordered region spans residues 28–118; it reads PKPGGGWNTG…QWNKPSKPKT (91 aa). Residues 37–54 show a composition bias toward low complexity; sequence GGSRYPGPGSPGGNRYPP. 6 consecutive repeat copies span residues 54 to 62, 63 to 70, 71 to 78, 79 to 86, 87 to 94, and 95 to 103. The segment at 54-103 is 6 X 8 AA tandem repeats of P-H-G-G-G-W-G-Q; that stretch reads PQGGGGWGQPHGGGWGQPHGGGWGQPHGGGWGQPHGGGWGQPHGGGGWGQ. The span at 55–107 shows a compositional bias: gly residues; sequence QGGGGWGQPHGGGWGQPHGGGWGQPHGGGWGQPHGGGWGQPHGGGGWGQGGTH. Cu(2+) contacts are provided by His-72, Gly-73, Gly-74, His-80, Gly-81, Gly-82, His-88, Gly-89, Gly-90, His-96, and Gly-98. The cysteines at positions 190 and 225 are disulfide-linked. Asn-192 and Asn-208 each carry an N-linked (GlcNAc...) asparagine glycan. Ala-241 carries the GPI-anchor amidated alanine lipid modification. Residues 242 to 264 constitute a propeptide, removed in mature form; sequence SVILFSSPPVILLISFLIFLIVG.

This sequence belongs to the prion family. As to quaternary structure, monomer and homodimer. Has a tendency to aggregate into amyloid fibrils containing a cross-beta spine, formed by a steric zipper of superposed beta-strands. Soluble oligomers may represent an intermediate stage on the path to fibril formation. Copper binding may promote oligomerization. Interacts with GRB2, APP, ERI3/PRNPIP and SYN1. Mislocalized cytosolically exposed PrP interacts with MGRN1; this interaction alters MGRN1 subcellular location and causes lysosomal enlargement. Interacts with KIAA1191.

It localises to the cell membrane. The protein resides in the golgi apparatus. Its function is as follows. Its primary physiological function is unclear. Has cytoprotective activity against internal or environmental stresses. May play a role in neuronal development and synaptic plasticity. May be required for neuronal myelin sheath maintenance. May play a role in iron uptake and iron homeostasis. Soluble oligomers are toxic to cultured neuroblastoma cells and induce apoptosis (in vitro). Association with GPC1 (via its heparan sulfate chains) targets PRNP to lipid rafts. Also provides Cu(2+) or Zn(2+) for the ascorbate-mediated GPC1 deaminase degradation of its heparan sulfate side chains. This is Major prion protein (PRNP) from Ailuropoda melanoleuca (Giant panda).